Reading from the N-terminus, the 662-residue chain is MESMYSREQYLSLCKELEKDDYCYYVLHNAVISDYDYDMKMQKLLAIEAQHPEWKVLWSPSMRLGDRVSGNFPVVAHSHPMLSIANAYTLEELNDFFSRVEKTLGYAPIYTLELKIDGIAVAIRYEQGILVQALSRGNGQKGEDITANIRTIRSLPLRLPKDAPEFLEVRGEVFFKRETFEQINAAQRQAEKPEFANPRNAAGGTLKLLSAKEAAQRNLELSVYGSLSDENTESHYDNLMLCKRWGFPIFGQPRQCQTIAEVVKSLDEIEGLRDQLPMEIDGVVIKVDDVEAQKALGMTAKHYRWALAYKYAPERAETILENILIQVGRTGVLTPVAKLSPVFLSGSRVSRASLYNEEEIERKDIRIGDTVYVEKGGEIIPKVVGVCLEKRPEGTQPWVMPEFCPVCHGKVTRESDKVSVRCTNPLCSAGAIEKIRFFVGRGALDIDHLGEKVITKLFDLGVIHRCCDIFKITEEDLLQVPGFKDKSVKNVLKSIEKAKQAPLDRFIAALGIPYVGVRVASALAQHFLNLEAVMGASLEELKSIEGIGDKVAESIEAYFNQQDTIEEIQKMLSLGVNVLPYHRESSSCLGKTFVITGTLKKMTRSEAEASIRNCGGKVGSSVSKSTDYLVVGEDPGSKFKKAQELEIPILNENDLLKILYPN.

NAD(+)-binding positions include 34–38 (DYDYD), 83–84 (SI), and Glu-113. Lys-115 serves as the catalytic N6-AMP-lysine intermediate. The NAD(+) site is built by Arg-136, Glu-172, Lys-286, and Lys-310. Zn(2+) is bound by residues Cys-404, Cys-407, Cys-422, and Cys-427. The 80-residue stretch at 583–662 (RESSSCLGKT…NDLLKILYPN (80 aa)) folds into the BRCT domain.

The protein belongs to the NAD-dependent DNA ligase family. LigA subfamily. Mg(2+) serves as cofactor. Requires Mn(2+) as cofactor.

The enzyme catalyses NAD(+) + (deoxyribonucleotide)n-3'-hydroxyl + 5'-phospho-(deoxyribonucleotide)m = (deoxyribonucleotide)n+m + AMP + beta-nicotinamide D-nucleotide.. Functionally, DNA ligase that catalyzes the formation of phosphodiester linkages between 5'-phosphoryl and 3'-hydroxyl groups in double-stranded DNA using NAD as a coenzyme and as the energy source for the reaction. It is essential for DNA replication and repair of damaged DNA. This is DNA ligase from Chlamydia caviae (strain ATCC VR-813 / DSM 19441 / 03DC25 / GPIC) (Chlamydophila caviae).